We begin with the raw amino-acid sequence, 1160 residues long: DNA polymerase III subunit alpha (1160 aa).

Belongs to the DNA polymerase type-C family. DnaE subfamily. The DNA polymerase III holoenzyme complex contains at least 10 different subunits organized into 3 functionally essential subassemblies: the Pol III core, the beta sliding clamp processivity factor and the clamp-loading complex. The Pol III core (subunits alpha, epsilon and theta) contains the polymerase and the 3'-5' exonuclease proofreading activities. The polymerase is tethered to the template via the dimeric beta sliding clamp processivity factor. The clamp loader (also called gamma complex) assembles the beta sliding clamp onto the primed template and plays a central role in the organization and communication at the replication fork. The clamp-loading complex contains delta, delta', psi and chi, and 3 copies of either or both of two different DnaX proteins, gamma and tau. The DNA replisome complex has a single clamp loader (3 tau and 1 each of delta, delta', psi and chi subunits) which binds 3 Pol III cores (1 core on the leading strand and 2 on the lagging strand) each with a beta sliding clamp dimer. Additional proteins in the replisome are other copies of gamma, psi and chi, Ssb, DNA helicase and RNA primase. Interacts with the beta sliding-clamp subunit via the peptide Gln-Ala-Asp-Met-Phe (residues 920-924).

Its subcellular location is the cytoplasm. The enzyme catalyses DNA(n) + a 2'-deoxyribonucleoside 5'-triphosphate = DNA(n+1) + diphosphate. Functionally, DNA polymerase III is a complex, multichain enzyme responsible for most of the replicative synthesis in bacteria. This DNA polymerase also exhibits 3' to 5' exonuclease activity. The alpha chain is the DNA polymerase catalytic subunit. It is tethered to replicating DNA by the beta sliding clamp (dnaN), which confers extremely high processivity to the catalytic subunit, copying a 5.4 kb genome in 11 seconds, a speed of at least 500 nucleotides/second at 30 degrees Celsius. This is DNA polymerase III subunit alpha (dnaE) from Escherichia coli (strain K12).